A 159-amino-acid chain; its full sequence is Ribosomal RNA large subunit methyltransferase H (159 aa).

Residues Leu76, Gly108, and Phe127–Phe132 contribute to the S-adenosyl-L-methionine site.

This sequence belongs to the RNA methyltransferase RlmH family. Homodimer.

The protein resides in the cytoplasm. The enzyme catalyses pseudouridine(1915) in 23S rRNA + S-adenosyl-L-methionine = N(3)-methylpseudouridine(1915) in 23S rRNA + S-adenosyl-L-homocysteine + H(+). Its function is as follows. Specifically methylates the pseudouridine at position 1915 (m3Psi1915) in 23S rRNA. This is Ribosomal RNA large subunit methyltransferase H from Clostridium botulinum (strain ATCC 19397 / Type A).